The following is a 385-amino-acid chain: DNA double-strand break repair protein Mre11 (385 aa).

Residues aspartate 14, histidine 16, and aspartate 58 each coordinate Mn(2+). The Proton donor role is filled by histidine 94. 3 residues coordinate Mn(2+): histidine 180, histidine 216, and histidine 218.

The protein belongs to the MRE11/RAD32 family. In terms of assembly, homodimer. Forms a heterotetramer composed of two Mre11 subunits and two Rad50 subunits. Homodimerization facilitates DNA binding. It depends on Mn(2+) as a cofactor.

Nuclease activity is regulated by Rad50. The mirin-derivative PFM39, specifically inhibits the 3'-5' exonuclease activity. The N-alkylated mirin-derivatives PFM03 and PFM01 specifically inhibit the endonuclease activity. In terms of biological role, part of the Rad50/Mre11 complex, which is involved in the early steps of DNA double-strand break (DSB) repair. The complex may facilitate opening of the processed DNA ends to aid in the recruitment of HerA and NurA. Mre11 binds to DSB ends and has both double-stranded 3'-5' exonuclease activity and single-stranded endonuclease activity. The protein is DNA double-strand break repair protein Mre11 of Thermotoga maritima (strain ATCC 43589 / DSM 3109 / JCM 10099 / NBRC 100826 / MSB8).